A 298-amino-acid polypeptide reads, in one-letter code: N-acetylmuramic acid 6-phosphate etherase (298 aa).

The region spanning 55–218 (ASKRYREGGR…STGVMIKQGK (164 aa)) is the SIS domain. Glutamate 83 functions as the Proton donor in the catalytic mechanism. Glutamate 114 is a catalytic residue.

Belongs to the GCKR-like family. MurNAc-6-P etherase subfamily. As to quaternary structure, homodimer.

The catalysed reaction is N-acetyl-D-muramate 6-phosphate + H2O = N-acetyl-D-glucosamine 6-phosphate + (R)-lactate. The protein operates within amino-sugar metabolism; N-acetylmuramate degradation. In terms of biological role, specifically catalyzes the cleavage of the D-lactyl ether substituent of MurNAc 6-phosphate, producing GlcNAc 6-phosphate and D-lactate. This Lactobacillus johnsonii (strain CNCM I-12250 / La1 / NCC 533) protein is N-acetylmuramic acid 6-phosphate etherase.